Reading from the N-terminus, the 776-residue chain is Lon protease (776 aa).

The region spanning 12–209 is the Lon N-terminal domain; sequence LPIIALRGLW…LVYKFVIKEI (198 aa). 360 to 367 contributes to the ATP binding site; the sequence is GPPGVGKT. Residues 596-776 form the Lon proteolytic domain; it reads EDTVGVVNGL…VKEILDEVLI (181 aa). Catalysis depends on residues Ser-683 and Lys-726.

Belongs to the peptidase S16 family. In terms of assembly, homohexamer. Organized in a ring with a central cavity.

It localises to the cytoplasm. The enzyme catalyses Hydrolysis of proteins in presence of ATP.. Functionally, ATP-dependent serine protease that mediates the selective degradation of mutant and abnormal proteins as well as certain short-lived regulatory proteins. Required for cellular homeostasis and for survival from DNA damage and developmental changes induced by stress. Degrades polypeptides processively to yield small peptide fragments that are 5 to 10 amino acids long. Binds to DNA in a double-stranded, site-specific manner. This chain is Lon protease, found in Finegoldia magna (strain ATCC 29328 / DSM 20472 / WAL 2508) (Peptostreptococcus magnus).